The primary structure comprises 261 residues: Indole-3-glycerol phosphate synthase (261 aa).

This sequence belongs to the TrpC family.

The enzyme catalyses 1-(2-carboxyphenylamino)-1-deoxy-D-ribulose 5-phosphate + H(+) = (1S,2R)-1-C-(indol-3-yl)glycerol 3-phosphate + CO2 + H2O. It participates in amino-acid biosynthesis; L-tryptophan biosynthesis; L-tryptophan from chorismate: step 4/5. The chain is Indole-3-glycerol phosphate synthase from Paraburkholderia phytofirmans (strain DSM 17436 / LMG 22146 / PsJN) (Burkholderia phytofirmans).